Here is a 414-residue protein sequence, read N- to C-terminus: Procollagen C-endopeptidase enhancer 2 (414 aa).

The first 22 residues, 1–22 (MGGASACIPLCLLLATARMARP), serve as a signal peptide directing secretion. 7 cysteine pairs are disulfide-bonded: cysteine 32/cysteine 58, cysteine 85/cysteine 106, cysteine 153/cysteine 180, cysteine 207/cysteine 230, cysteine 296/cysteine 363, cysteine 300/cysteine 366, and cysteine 311/cysteine 414. CUB domains follow at residues 32–143 (CGGI…YSAA) and 153–267 (CGGR…YKFR). Residues 296–414 (CQQKCRRMGT…PMNALKNKQC (119 aa)) enclose the NTR domain. N-linked (GlcNAc...) asparagine glycosylation occurs at asparagine 354.

As to quaternary structure, interacts with heparin with high affinity, and type I or II collagen. In terms of processing, O-glycosylated; contains sialic acid.

It is found in the secreted. In terms of biological role, binds to the C-terminal propeptide of types I and II procollagens and may enhance the cleavage of that propeptide by BMP1. The chain is Procollagen C-endopeptidase enhancer 2 (Pcolce2) from Mus musculus (Mouse).